Reading from the N-terminus, the 404-residue chain is Putative CBL-interacting protein kinase 27 (404 aa).

The Protein kinase domain maps to 11–266 (YEMGRVLGHG…VAGLLETPWF (256 aa)). ATP-binding positions include 17-25 (LGHGNFGRV) and K40. D134 functions as the Proton acceptor in the catalytic mechanism. The tract at residues 152–181 (DFGLSALACHARPDGLLHTACGTPAYVAPE) is activation loop. Residues 294 to 321 (DKDEPPEVLNAFHLISLSEGFDLSPLFE) enclose the NAF domain. Residues 335–356 (AGGTRFATREAASGVVARLEAL) form a PPI region.

This sequence belongs to the protein kinase superfamily. CAMK Ser/Thr protein kinase family. SNF1 subfamily. It depends on Mn(2+) as a cofactor.

It carries out the reaction L-seryl-[protein] + ATP = O-phospho-L-seryl-[protein] + ADP + H(+). The catalysed reaction is L-threonyl-[protein] + ATP = O-phospho-L-threonyl-[protein] + ADP + H(+). Its function is as follows. CIPK serine-threonine protein kinases interact with CBL proteins. Binding of a CBL protein to the regulatory NAF domain of CIPK protein lead to the activation of the kinase in a calcium-dependent manner. This is Putative CBL-interacting protein kinase 27 (CIPK27) from Oryza sativa subsp. japonica (Rice).